A 290-amino-acid polypeptide reads, in one-letter code: Glutaredoxin domain-containing cysteine-rich protein 1 (290 aa).

One can recognise a Glutaredoxin domain in the interval 127-234; that stretch reads LQQPSADLEF…DLLTKIERVQ (108 aa).

This sequence belongs to the GRXCR1 family. In the inner ear, expressed predominantly in sensory hair cells and their stereocilia bundles with higher levels in outer hair cells (OHC) at P1 and in inner hair cells (IHC) at P5. At P1, expression is prominent in each row of stereocilia within bundles including immature shorter stereocilia. Expression is also observed in apical microvilli of sensory cells at P1 and in kinocilia at P1 and P5. In the adult, expression is localized throughout the length of the stereocilia of both OHC and IHC (at protein level).

The protein resides in the cell projection. Its subcellular location is the stereocilium. It is found in the microvillus. The protein localises to the kinocilium. Its function is as follows. May play a role in actin filament architecture in developing stereocilia of sensory cells. This chain is Glutaredoxin domain-containing cysteine-rich protein 1 (Grxcr1), found in Mus musculus (Mouse).